The following is a 238-amino-acid chain: N-methyltransferase vrtF (238 aa).

This sequence belongs to the methyltransferase superfamily.

It participates in secondary metabolite biosynthesis; terpenoid biosynthesis. Its function is as follows. N-methyltransferase; part of the gene cluster that mediates the biosynthesis of viridicatumtoxin, a tetracycline-like fungal meroterpenoid with a unique, fused spirobicyclic ring system. The first step of the pathway is the production of the malonamoyl-CoA starter unit for the polyketide synthase vrtA. The aldolase vrtJ may be involved in the synthesis of the malonamate substrate for malonamoyl-CoA synthetase vrtB. The polyketide synthase vrtA then may utilize the malonamoyl-CoA starter unit, followed by sequential condensation of eight malonyl-CoA units to form the polyketide backbone. The cyclization of the last ring could be mediated by the lactamase-like protein vrtG. The proposed post-PKS tailoring steps are a hydroxylation at C5 catalyzed the cytochrome P450 monooxygenase vrtE, a hydroxylation at C12a catalyzed by VrtH and/or VrtI, and an O-methylation by the O-methyltransferase vrtF. VrtC is then proposed to catalyze the transfer of a geranyl group synthesized by vrtD to the aromatic C ring of the tetracyclic polyketide intermediate of viridicatumtoxin to yield previridicatumtoxin. Finally, the cytochrome P450 monooxygenase vrtK catalyzes the spirocyclization of the geranyl moiety of previridicatumtoxin to afford viridicatumtoxin. This chain is N-methyltransferase vrtF, found in Penicillium aethiopicum.